Here is a 456-residue protein sequence, read N- to C-terminus: Solute carrier family 49 member 4 homolog (456 aa).

Topologically, residues 1 to 29 (MGLEWSSPGERQPLLFPGGPRSPRVFGRR) are cytoplasmic. The Di-leucine motif; mediates lysosomal localization signature appears at 14–15 (LL). The chain crosses the membrane as a helical span at residues 30-50 (WLVLLLFSVLAFLQGLVWNSW). Residues 51 to 67 (GPIQISARTAYKFSGLD) are Lumenal-facing. The chain crosses the membrane as a helical span at residues 68–88 (IALLVLWGPIGFLPCFLFMWL). Over 89-95 (MDNRGLR) the chain is Cytoplasmic. A helical membrane pass occupies residues 96 to 116 (ITVLLTALLMVLGAGLRCVPV). At 117 to 123 (EDLAIRR) the chain is on the lumenal side. The chain crosses the membrane as a helical span at residues 124 to 144 (ILIHGGQLLNGFAGPTVMNAA). Residues 145–162 (PFLSTTWFAPDERATATA) lie on the Cytoplasmic side of the membrane. A helical membrane pass occupies residues 163–183 (IASMLNYLGGACAFLVGPLVV). Over 184–207 (PAPNSTSGLLLYSGSTDAIKDRIE) the chain is Lumenal. Residue Asn-187 is glycosylated (N-linked (GlcNAc...) asparagine). Residues 208 to 228 (AVMYAEFGIIFVVFAAILAYF) traverse the membrane as a helical segment. Topologically, residues 229–259 (PARPPVPPSVAAASRRLSYRTSIFRLLSNLR) are cytoplasmic. A helical membrane pass occupies residues 260 to 280 (FLLIVLAYAIPLGFYSGWIGV). The Lumenal segment spans residues 281 to 292 (LDLILTPVHVTQ). A helical transmembrane segment spans residues 293-313 (VDAGWVGFWSIVGGCVVGIAV). Topologically, residues 314 to 326 (GRFADSIRGVLKP) are cytoplasmic. Residues 327 to 347 (ILLLLFSGATLSATWFTLTFL) traverse the membrane as a helical segment. At 348–362 (SNVTHLPLTTATLYT) the chain is on the lumenal side. Asn-349 carries N-linked (GlcNAc...) asparagine glycosylation. A helical membrane pass occupies residues 363-383 (SCILIGVFLNGTVPIFFELFV). Residues 384-392 (ETVYPIPEG) lie on the Cytoplasmic side of the membrane. Residues 393–413 (IACGVVTFLSNIFMGVLLVFL) form a helical membrane-spanning segment. Residues 414–420 (TMYQMEL) lie on the Lumenal side of the membrane. A helical membrane pass occupies residues 421-441 (SWLNWCLTGSCFLSLFFIACF). Residues 442-456 (RESYDRLYLDVFVSV) lie on the Cytoplasmic side of the membrane.

This sequence belongs to the major facilitator superfamily.

Its subcellular location is the lysosome membrane. It carries out the reaction pyridoxine(out) + n H(+)(out) = pyridoxine(in) + n H(+)(in). Functionally, mediates H(+)-dependent pyridoxine transport. The protein is Solute carrier family 49 member 4 homolog (slc49a4) of Xenopus laevis (African clawed frog).